We begin with the raw amino-acid sequence, 460 residues long: ATP synthase subunit beta (460 aa).

150 to 157 (GGAGVGKT) contributes to the ATP binding site.

Belongs to the ATPase alpha/beta chains family. F-type ATPases have 2 components, CF(1) - the catalytic core - and CF(0) - the membrane proton channel. CF(1) has five subunits: alpha(3), beta(3), gamma(1), delta(1), epsilon(1). CF(0) has three main subunits: a(1), b(2) and c(9-12). The alpha and beta chains form an alternating ring which encloses part of the gamma chain. CF(1) is attached to CF(0) by a central stalk formed by the gamma and epsilon chains, while a peripheral stalk is formed by the delta and b chains.

The protein localises to the cell inner membrane. The enzyme catalyses ATP + H2O + 4 H(+)(in) = ADP + phosphate + 5 H(+)(out). Functionally, produces ATP from ADP in the presence of a proton gradient across the membrane. The catalytic sites are hosted primarily by the beta subunits. The polypeptide is ATP synthase subunit beta (Salmonella agona (strain SL483)).